The following is a 49-amino-acid chain: Large ribosomal subunit protein bL33A (49 aa).

Belongs to the bacterial ribosomal protein bL33 family.

The polypeptide is Large ribosomal subunit protein bL33A (Staphylococcus aureus (strain Mu3 / ATCC 700698)).